We begin with the raw amino-acid sequence, 1698 residues long: Cullin-7 (1698 aa).

The disordered stretch occupies residues glutamine 315–phenylalanine 357. At serine 339 the chain carries Phosphoserine. Residues arginine 360–phenylalanine 433 enclose the CPH domain. A compositionally biased stretch (basic and acidic residues) spans serine 601 to glutamate 611. The disordered stretch occupies residues serine 601 to arginine 623. One can recognise a DOC domain in the interval proline 814–alanine 993. Positions glycine 1345 to glycine 1370 are disordered. Lysine 1576 participates in a covalent cross-link: Glycyl lysine isopeptide (Lys-Gly) (interchain with G-Cter in NEDD8).

This sequence belongs to the cullin family. Component of the 3M complex, composed of core components CUL7, CCDC8 and OBSL1. Component of the Cul7-RING(FBXW8) complex consisting of CUL7, RBX1, SKP1 and FBXW8. Within the Cul7-RING(FBXW8) complex interacts with FBXW8 and RBX1, but not with SKP1. Interacts with CUL1 (via the C-terminal domain); the interaction seems to be mediated by FBXW8; it is likely specific to FBXW8, but not other F-box proteins. Interacts (via the CPH domain) with p53/TP53; the interaction preferentially involves tetrameric and dimeric p53/TP53; this interaction recruits p53/TP53 for ubiquitination by neddylated CUL1-RBX1. The CUL7-CUL9 heterodimer seems to interact specifically with p53/TP53. Interacts with FBXW8; interaction is mutually exclusive of binding to CUL9 or p53/TP53. Interacts with CUL9; leading to inhibited CUL9 activity. Interacts with OBSL1. Interacts (as part of the 3M complex) with HDAC4 and HDAC5; it is negatively regulated by ANKRA2. As to quaternary structure, (Microbial infection) Interacts with SV40 Large T antigen; this interaction seems to inhibit CUL7. In terms of processing, according to a report, may not be neddylated despite the conserved consensus site for neddylation at Lys-1576. Structural study of the Cul7-RING(FBXW8) reveals that both CUL7 and RBX1 are in orientations that are incompatible with neddylation. Highly expressed in fetal kidney and adult skeletal muscle. Also abundant in fetal brain, as well as in adult pancreas, kidney, placenta and heart. Detected in trophoblasts, lymphoblasts, osteoblasts, chondrocytes and skin fibroblasts.

Its subcellular location is the cytoplasm. The protein resides in the cytoskeleton. The protein localises to the microtubule organizing center. It is found in the centrosome. It localises to the perinuclear region. Its subcellular location is the golgi apparatus. It participates in protein modification; protein ubiquitination. Functionally, core component of the 3M and Cul7-RING(FBXW8) complexes, which mediate the ubiquitination and subsequent proteasomal degradation of target proteins. Core component of the 3M complex, a complex required to regulate microtubule dynamics and genome integrity. It is unclear how the 3M complex regulates microtubules, it could act by controlling the level of a microtubule stabilizer. The Cul7-RING(FBXW8) complex alone lacks ubiquitination activity and does not promote polyubiquitination and proteasomal degradation of p53/TP53. However it mediates recruitment of p53/TP53 for ubiquitination by neddylated CUL1-RBX1. Interaction with CUL9 is required to inhibit CUL9 activity and ubiquitination of BIRC5. The Cul7-RING(FBXW8) complex also mediates ubiquitination and consequent degradation of target proteins such as GORASP1, IRS1 and MAP4K1/HPK1. Ubiquitination of GORASP1 regulates Golgi morphogenesis and dendrite patterning in brain. Mediates ubiquitination and degradation of IRS1 in a mTOR-dependent manner: the Cul7-RING(FBXW8) complex recognizes and binds IRS1 previously phosphorylated by S6 kinase (RPS6KB1 or RPS6KB2). The Cul7-RING(FBXW8) complex also mediates ubiquitination of MAP4K1/HPK1: recognizes and binds autophosphorylated MAP4K1/HPK1, leading to its degradation, thereby affecting cell proliferation and differentiation. Acts as a regulator in trophoblast cell epithelial-mesenchymal transition and placental development. While the Cul7-RING(FBXW8) and the 3M complexes are associated and involved in common processes, CUL7 and the Cul7-RING(FBXW8) complex may have additional functions. Probably plays a role in the degradation of proteins involved in endothelial proliferation and/or differentiation. The protein is Cullin-7 (CUL7) of Homo sapiens (Human).